The following is a 145-amino-acid chain: Cystatin-F (145 aa).

An N-terminal signal peptide occupies residues 1–19 (MRAAGTLLAFCCLVLSTTG). N62 carries an N-linked (GlcNAc...) asparagine glycan. The short motif at 81–85 (QIVKG) is the Secondary area of contact element. An intrachain disulfide couples C99 to C110. The N-linked (GlcNAc...) asparagine glycan is linked to N115. Residues C124 and C144 are joined by a disulfide bond.

This sequence belongs to the cystatin family. In terms of assembly, homodimer; disulfide-linked. In terms of tissue distribution, primarily expressed in peripheral blood cells and spleen.

The protein resides in the secreted. It is found in the cytoplasm. Its function is as follows. Inhibits papain and cathepsin L but with affinities lower than other cystatins. May play a role in immune regulation through inhibition of a unique target in the hematopoietic system. The chain is Cystatin-F (CST7) from Homo sapiens (Human).